A 190-amino-acid polypeptide reads, in one-letter code: MAERENRRGNRRDREEAAPEFADRLVAINRVSKTVKGGKRFGFAALVVVGDQKGRVGFGKGKAKEVPEAIRKATEQAKRQMIRVQLREGRTLHHDIEGRHGAGKVVMRAAPEGTGIIAGGPMRAVFEMLGVKDVVSKSLGSANPYNMIRATIDGLKKEQSPRSVAQRRGKKVADILPKRDEAPAAEAAEA.

The S5 DRBM domain maps to 21-84 (FADRLVAINR…EQAKRQMIRV (64 aa)). A disordered region spans residues 156 to 190 (KKEQSPRSVAQRRGKKVADILPKRDEAPAAEAAEA). Positions 171 to 182 (KVADILPKRDEA) are enriched in basic and acidic residues.

The protein belongs to the universal ribosomal protein uS5 family. In terms of assembly, part of the 30S ribosomal subunit. Contacts proteins S4 and S8.

With S4 and S12 plays an important role in translational accuracy. Functionally, located at the back of the 30S subunit body where it stabilizes the conformation of the head with respect to the body. This Ruegeria pomeroyi (strain ATCC 700808 / DSM 15171 / DSS-3) (Silicibacter pomeroyi) protein is Small ribosomal subunit protein uS5.